A 1091-amino-acid polypeptide reads, in one-letter code: ATP-citrate synthase (1091 aa).

The ATP-grasp domain occupies 4–265 (KAISEQTGKE…LDAKSGASLK (262 aa)). Residues Lys58, Arg66, Gly67, Pro109, Val111, and Glu118 each coordinate ATP. Tyr131 is modified (phosphotyrosine). Asp216 lines the ATP pocket. The Mg(2+) site is built by Asp257, Ser260, and Ala262. Ser263 carries the phosphoserine modification. Citrate contacts are provided by Gly309, Asn346, Thr348, Tyr364, and Arg379. Positions 442 to 457 (SGSTSTPAPSRTASFS) are enriched in low complexity. Residues 442-471 (SGSTSTPAPSRTASFSESRTDEVAPAKKAK) form a disordered region. Thr447 is subject to Phosphothreonine. Ser451 carries the post-translational modification Phosphoserine. Position 455 is a phosphoserine; by PKA and PKB/AKT1 or PKB/AKT2 or BCKDK (Ser455). Position 459 is a phosphoserine (Ser459). N6-acetyllysine; alternate is present on residues Lys530, Lys536, and Lys544. Residues Lys530, Lys536, and Lys544 each participate in a glycyl lysine isopeptide (Lys-Gly) (interchain with G-Cter in ubiquitin); alternate cross-link. Thr629 is modified (phosphothreonine). The residue at position 653 (Ser653) is a Phosphoserine. Phosphotyrosine is present on Tyr672. His750 (tele-phosphohistidine intermediate) is an active-site residue. 769-779 (LKEAGVFVPRS) contributes to the CoA binding site. Residue Ser829 is modified to Phosphoserine. Residues Lys938, Lys958, Lys968, and Lys1067 each carry the N6-acetyllysine modification. Ser1090 is subject to Phosphoserine.

It in the N-terminal section; belongs to the succinate/malate CoA ligase beta subunit family. In the C-terminal section; belongs to the succinate/malate CoA ligase alpha subunit family. Homotetramer. Requires Mg(2+) as cofactor. Phosphorylated by PKA and GSK3 in a sequential manner; phosphorylation results in activation of its activity. Phosphorylation on Thr-447 and Ser-451 depends on the phosphorylation state of Ser-455. Phosphorylation on Ser-455 is decreased by prior phosphorylation on the other 2 residues. Phosphorylated at Ser-455 by BCKDK and dephosphorylated by protein phosphatase PPM1K. In terms of processing, ISGylated. Post-translationally, acetylated at Lys-530, Lys-536 and Lys-544 by KAT2B/PCAF. Acetylation is promoted by glucose and stabilizes the protein, probably by preventing ubiquitination at the same sites. Acetylation promotes de novo lipid synthesis. Deacetylated by SIRT2. Ubiquitinated at Lys-530, Lys-536 and Lys-544 by the BCR(KLHL25) E3 ubiquitin ligase complex and UBR4, leading to its degradation. Ubiquitination is probably inhibited by acetylation at same site. BCR(KLHL25)-mediated degradation of ACLY promotes fatty acid oxidation and is required for differentiation of inducible regulatory T (iTreg) cells.

The protein resides in the cytoplasm. The protein localises to the cytosol. The catalysed reaction is oxaloacetate + acetyl-CoA + ADP + phosphate = citrate + ATP + CoA. Phosphorylation results in activation of its activity. Glucose 6-phosphate, fructose 6-phosphate, fructose 2,6-bisphosphate, ribulose 5-phosphate, and fructose 1,6-bisphosphate also act as activators. Catalyzes the cleavage of citrate into oxaloacetate and acetyl-CoA, the latter serving as common substrate in multiple biochemical reactions in protein, carbohydrate and lipid metabolism. The chain is ATP-citrate synthase (ACLY) from Bos taurus (Bovine).